The sequence spans 374 residues: Protein-glutamate methylesterase/protein-glutamine glutaminase (374 aa).

The Response regulatory domain occupies 4–121 (KVLVVDDSGF…SRNPDKVKQM (118 aa)). Asp55 is modified (4-aspartylphosphate). The segment at 144-186 (PVAAPVPASSPAPASSFASPAPARPAATARAAAPAASHSPAPK) is disordered. Over residues 154–183 (PAPASSFASPAPARPAATARAAAPAASHSP) the composition is skewed to low complexity. Residues 183–374 (PAPKRKPYKL…IGKHLVEACV (192 aa)) form the CheB-type methylesterase domain. Catalysis depends on residues Ser198, His225, and Asp318.

This sequence belongs to the CheB family. Phosphorylated by CheA. Phosphorylation of the N-terminal regulatory domain activates the methylesterase activity.

The protein resides in the cytoplasm. It catalyses the reaction [protein]-L-glutamate 5-O-methyl ester + H2O = L-glutamyl-[protein] + methanol + H(+). The enzyme catalyses L-glutaminyl-[protein] + H2O = L-glutamyl-[protein] + NH4(+). In terms of biological role, involved in chemotaxis. Part of a chemotaxis signal transduction system that modulates chemotaxis in response to various stimuli. Catalyzes the demethylation of specific methylglutamate residues introduced into the chemoreceptors (methyl-accepting chemotaxis proteins or MCP) by CheR. Also mediates the irreversible deamidation of specific glutamine residues to glutamic acid. This Pseudomonas putida (Arthrobacter siderocapsulatus) protein is Protein-glutamate methylesterase/protein-glutamine glutaminase.